Reading from the N-terminus, the 832-residue chain is MPLSCQHFRKLLLLDEEAGPLEEELPRLADEGLNHRVAEDLNLQLPNVSIPWTHKVGNFTGLYSSTAPVFNPNWQTPSFPDIHLHQDIINKCEQLVGPLTVNEKRRLKLIMPARFYPNSTKYFPPDKGIKPYYPEHGVNHYFQARHYLHTLWKAGVLYKRETTRSASFCGSPYSWEQELQHGAEPFCHQPFGILPRASIGPAVPSQHKQSRLGLQSQQGHLARSHQGRSGSIWARVHSTSRRSFGVEPAGSGRNHNTASSSSSCLHQSAVRKAAYSHLSTFERHSSSGHAVELHGFPPSSAGSQSKGSVFPCWWLQFRDSEPCSDNCLSHIVNLLEDWGPCTEHGEHLIRIPRTPARVTGGVFLVDKNPHNSSESRLVVDFSQFSRGSTRVSWPKFAVPNLQSLTNLLSSNLSWLSLDVSAAFYHLPLHPAAMPHLLVGSSGLPRYVARLSSTSRNHHHQRGTMQNLHDFCSRNLFVSLMLLYKTFGRKLHLYSHPTIMGFRKIPMGVGLSPFLLAQFTSALCSVVRRAFPHCLAFSYMDDMVLGAKSVQHLESLYTAVTNFLLSLGIHLNPGKTKRWGYSLHFMGYVIGSWGTLPQDHIVQKIKQCFRKLPVNRPIDWKVCQRIVGLLGFAAPFTQCGYPALMPLYNCIHNRQAFTFSPTYKAFLRTQYLTLYPVARQRPGLCQVFADATPTGWGLALGPQRMRGTFVAPLPIHTAELLAACFARSRSGANIIGTDNSVVLSRKYTSFPWLLGCAANWILRGTSFVYVPSALNPADDPSRGRLGLYRPLLRLPFRPTTGRTSLYAVSPSVPSHLPVRVHFASPLHVAWRPP.

The tract at residues 1–177 (MPLSCQHFRK…FCGSPYSWEQ (177 aa)) is terminal protein domain (TP). The spacer stretch occupies residues 178 to 335 (ELQHGAEPFC…NCLSHIVNLL (158 aa)). Residues 198–264 (SIGPAVPSQH…HNTASSSSSC (67 aa)) are disordered. Positions 336–679 (EDWGPCTEHG…YLTLYPVARQ (344 aa)) are polymerase/reverse transcriptase domain (RT). Positions 346-589 (EHLIRIPRTP…YSLHFMGYVI (244 aa)) constitute a Reverse transcriptase domain. The Mg(2+) site is built by aspartate 418, aspartate 540, and aspartate 541.

The protein belongs to the hepadnaviridae P protein family.

The enzyme catalyses DNA(n) + a 2'-deoxyribonucleoside 5'-triphosphate = DNA(n+1) + diphosphate. It catalyses the reaction Endonucleolytic cleavage to 5'-phosphomonoester.. Activated by host HSP70 and HSP40 in vitro to be able to bind the epsilon loop of the pgRNA. Because deletion of the RNase H region renders the protein partly chaperone-independent, the chaperones may be needed indirectly to relieve occlusion of the RNA-binding site by this domain. Inhibited by several reverse-transcriptase inhibitors: Lamivudine, Adefovir and Entecavir. In terms of biological role, multifunctional enzyme that converts the viral RNA genome into dsDNA in viral cytoplasmic capsids. This enzyme displays a DNA polymerase activity that can copy either DNA or RNA templates, and a ribonuclease H (RNase H) activity that cleaves the RNA strand of RNA-DNA heteroduplexes in a partially processive 3'- to 5'-endonucleasic mode. Neo-synthesized pregenomic RNA (pgRNA) are encapsidated together with the P protein, and reverse-transcribed inside the nucleocapsid. Initiation of reverse-transcription occurs first by binding the epsilon loop on the pgRNA genome, and is initiated by protein priming, thereby the 5'-end of (-)DNA is covalently linked to P protein. Partial (+)DNA is synthesized from the (-)DNA template and generates the relaxed circular DNA (RC-DNA) genome. After budding and infection, the RC-DNA migrates in the nucleus, and is converted into a plasmid-like covalently closed circular DNA (cccDNA). The activity of P protein does not seem to be necessary for cccDNA generation, and is presumably released from (+)DNA by host nuclear DNA repair machinery. This Pongo pygmaeus (Bornean orangutan) protein is Protein P.